The primary structure comprises 90 residues: DNA-binding protein HU-alpha (90 aa).

It belongs to the bacterial histone-like protein family. In terms of assembly, heterodimer of an alpha and a beta chain.

Its function is as follows. Histone-like DNA-binding protein which is capable of wrapping DNA to stabilize it, and thus to prevent its denaturation under extreme environmental conditions. The chain is DNA-binding protein HU-alpha (hupA) from Serratia marcescens.